A 754-amino-acid chain; its full sequence is Neprilysin-1 (754 aa).

Residues 5 to 27 (FGPPIVFLISCYALILCGTVDAL) form a helical; Signal-anchor for type II membrane protein membrane-spanning segment. N-linked (GlcNAc...) asparagine glycans are attached at residues Asn-38, Asn-81, Asn-132, Asn-217, Asn-273, Asn-303, and Asn-441. Residues 63-754 (VGDSEGYQEA…MNPTKRCVVW (692 aa)) enclose the Peptidase M13 domain. Cystine bridges form between Cys-87–Cys-739, Cys-95–Cys-699, Cys-151–Cys-414, and Cys-624–Cys-751. His-587 is a binding site for Zn(2+). Glu-588 is an active-site residue. His-591 is a Zn(2+) binding site. Asn-612 carries an N-linked (GlcNAc...) asparagine glycan. Glu-649 contributes to the Zn(2+) binding site. Asp-653 functions as the Proton donor in the catalytic mechanism.

It belongs to the peptidase M13 family. The cofactor is Zn(2+). Specifically expressed in pharyngeal cells and a single head neuron.

It is found in the membrane. Probable cell surface protease. Required to control the neuronal innervation of pharyngeal pumping. The polypeptide is Neprilysin-1 (nep-1) (Caenorhabditis elegans).